Reading from the N-terminus, the 1366-residue chain is DNA-directed RNA polymerase subunit beta' (1366 aa).

Residues 1–20 (MTSSKPKKTSRVRKTTKNSK) show a composition bias toward basic residues. Positions 1–37 (MTSSKPKKTSRVRKTTKNSKKNNPVTMPVLPKTPPSF) are disordered. C248, C315, C322, and C325 together coordinate Zn(2+). The disordered stretch occupies residues 1292 to 1366 (TVDMPQSPAV…LQEEGLLSDE (75 aa)). Over residues 1354–1366 (LEGLQEEGLLSDE) the composition is skewed to low complexity.

The protein belongs to the RNA polymerase beta' chain family. RpoC2 subfamily. In terms of assembly, in cyanobacteria the RNAP catalytic core is composed of 2 alpha, 1 beta, 1 beta', 1 gamma and 1 omega subunit. When a sigma factor is associated with the core the holoenzyme is formed, which can initiate transcription. Zn(2+) is required as a cofactor.

The catalysed reaction is RNA(n) + a ribonucleoside 5'-triphosphate = RNA(n+1) + diphosphate. Its function is as follows. DNA-dependent RNA polymerase catalyzes the transcription of DNA into RNA using the four ribonucleoside triphosphates as substrates. In Prochlorococcus marinus (strain MIT 9215), this protein is DNA-directed RNA polymerase subunit beta'.